A 145-amino-acid polypeptide reads, in one-letter code: Ribosomal RNA large subunit methyltransferase H (145 aa).

S-adenosyl-L-methionine is bound by residues Leu-62, Gly-94, and 113 to 118 (LGQLTL).

It belongs to the RNA methyltransferase RlmH family. As to quaternary structure, homodimer.

Its subcellular location is the cytoplasm. The enzyme catalyses pseudouridine(1915) in 23S rRNA + S-adenosyl-L-methionine = N(3)-methylpseudouridine(1915) in 23S rRNA + S-adenosyl-L-homocysteine + H(+). Its function is as follows. Specifically methylates the pseudouridine at position 1915 (m3Psi1915) in 23S rRNA. This is Ribosomal RNA large subunit methyltransferase H from Deinococcus deserti (strain DSM 17065 / CIP 109153 / LMG 22923 / VCD115).